The primary structure comprises 359 residues: Fructose-1,6-bisphosphatase class 1 (359 aa).

4 residues coordinate Mg(2+): glutamate 95, aspartate 117, leucine 119, and aspartate 120. Residues 120–123 (DGSS) and asparagine 212 each bind substrate. Glutamate 284 lines the Mg(2+) pocket.

The protein belongs to the FBPase class 1 family. Homotetramer. Mg(2+) is required as a cofactor.

The protein resides in the cytoplasm. It catalyses the reaction beta-D-fructose 1,6-bisphosphate + H2O = beta-D-fructose 6-phosphate + phosphate. Its pathway is carbohydrate biosynthesis; gluconeogenesis. The protein is Fructose-1,6-bisphosphatase class 1 of Hydrogenophilus thermoluteolus (Pseudomonas hydrogenothermophila).